The chain runs to 427 residues: Enolase (427 aa).

Residue Q163 coordinates (2R)-2-phosphoglycerate. E205 (proton donor) is an active-site residue. The Mg(2+) site is built by D242, E285, and D312. Residues K337, R366, S367, and K388 each contribute to the (2R)-2-phosphoglycerate site. The active-site Proton acceptor is the K337.

The protein belongs to the enolase family. The cofactor is Mg(2+).

The protein resides in the cytoplasm. Its subcellular location is the secreted. It localises to the cell surface. The catalysed reaction is (2R)-2-phosphoglycerate = phosphoenolpyruvate + H2O. Its pathway is carbohydrate degradation; glycolysis; pyruvate from D-glyceraldehyde 3-phosphate: step 4/5. Catalyzes the reversible conversion of 2-phosphoglycerate (2-PG) into phosphoenolpyruvate (PEP). It is essential for the degradation of carbohydrates via glycolysis. The protein is Enolase of Methylocella silvestris (strain DSM 15510 / CIP 108128 / LMG 27833 / NCIMB 13906 / BL2).